We begin with the raw amino-acid sequence, 453 residues long: CAAX prenyl protease 1 (453 aa).

At M1–N12 the chain is on the lumenal side. Residues I13–L33 form a helical membrane-spanning segment. The Cytoplasmic segment spans residues T34–K89. The chain crosses the membrane as a helical span at residues Y90–V110. Residues R111–S121 are Lumenal-facing. Residues L122–Y142 traverse the membrane as a helical segment. The Cytoplasmic segment spans residues S143–K167. Residues S168 to D188 traverse the membrane as a helical segment. At K189–Y197 the chain is on the lumenal side. Residues I198 to M218 form a helical membrane-spanning segment. Over P219–H306 the chain is Cytoplasmic. H297 is a binding site for Zn(2+). Residue E298 is part of the active site. H301 is a binding site for Zn(2+). Residues I307–S327 form a helical membrane-spanning segment. The Lumenal portion of the chain corresponds to I328–E357. Residues F358–M378 traverse the membrane as a helical segment. At Q379–N453 the chain is on the cytoplasmic side. E390 lines the Zn(2+) pocket. The Proton donor role is filled by D394.

It belongs to the peptidase M48A family. It depends on Zn(2+) as a cofactor.

The protein localises to the endoplasmic reticulum membrane. The catalysed reaction is Hydrolyzes the peptide bond -P2-(S-farnesyl or geranylgeranyl)C-P1'-P2'-P3'-COOH where P1' and P2' are amino acids with aliphatic side chains and P3' is any C-terminal residue.. Proteolytically removes the C-terminal three residues of farnesylated A-factor mating pheromone. Also acts to cleave the N-terminal extension of the pheromone. Does not act on Ras. The sequence is that of CAAX prenyl protease 1 (STE24) from Saccharomyces cerevisiae (strain ATCC 204508 / S288c) (Baker's yeast).